The sequence spans 337 residues: Cytoskeleton protein RodZ (337 aa).

Residues M1–G111 are Cytoplasmic-facing. The region spanning L19–L71 is the HTH cro/C1-type domain. The segment at residues Q30–E49 is a DNA-binding region (H-T-H motif). A helical; Signal-anchor for type II membrane protein membrane pass occupies residues W112–W132. Residues W133–Q337 are Periplasmic-facing. Polar residues predominate over residues T145–N167. Residues T145–A235 are disordered. The span at T168–Q207 shows a compositional bias: low complexity. Residues N208–V218 show a composition bias toward polar residues. Positions D219–A235 are enriched in low complexity.

The protein belongs to the RodZ family.

Its subcellular location is the cell inner membrane. Cytoskeletal protein that is involved in cell-shape control through regulation of the length of the long axis. This Shigella boydii serotype 4 (strain Sb227) protein is Cytoskeleton protein RodZ.